Consider the following 487-residue polypeptide: Serralysin (487 aa).

Positions 1-16 (MQSTKKAIEITESSLA) are excised as a propeptide. His-192 lines the Zn(2+) pocket. The active site involves Glu-193. His-196, His-202, and Tyr-232 together coordinate Zn(2+). Arg-269, Gly-271, Thr-273, Asp-301, Gly-303, Gly-304, Asp-306, Thr-343, Glu-345, Gly-350, Gly-352, Asp-354, Asn-359, Ala-361, Asn-363, Gly-367, Gly-368, Ala-369, Gly-370, Asp-372, Gly-376, Gly-377, Gly-378, Gly-379, Asp-381, Gly-385, Gly-386, Ala-387, Gly-388, Asp-390, Asp-399, Asp-406, and Asp-416 together coordinate Ca(2+). Hemolysin-type calcium-binding repeat units lie at residues 348-365 (IGGS…NNVL) and 366-383 (KGGA…ADEL).

Belongs to the peptidase M10B family. Requires Ca(2+) as cofactor. Zn(2+) serves as cofactor.

It localises to the secreted. The catalysed reaction is Preferential cleavage of bonds with hydrophobic residues in P1'.. Has insecticidal activity against the locust M.palpalis. When administered orally to locusts at a low dose it causes them to lie on their sides exhibiting sporadic limb movements and muscular twitching, followed by full recovery. When administered at higher doses the same symptoms are observed, followed by death. The polypeptide is Serralysin (Serratia marcescens).